The primary structure comprises 386 residues: Chaperone protein DnaJ (386 aa).

In terms of domain architecture, J spans 6–70 (DYYEVLGVDK…QKRAAYDQYG (65 aa)). A CR-type zinc finger spans residues 141–223 (GKDTEVSYKR…CHGTGHEKKT (83 aa)). Zn(2+) contacts are provided by Cys-154, Cys-157, Cys-171, Cys-174, Cys-197, Cys-200, Cys-211, and Cys-214. 4 CXXCXGXG motif repeats span residues 154–161 (CHTCGGNG), 171–178 (CHKCKGSG), 197–204 (CDVCHGTG), and 211–218 (CETCHGTG). The disordered stretch occupies residues 363–386 (LTGQSTEEQQSEGFFDKMKDAFKK). The span at 364–374 (TGQSTEEQQSE) shows a compositional bias: polar residues. The span at 376–386 (FFDKMKDAFKK) shows a compositional bias: basic and acidic residues.

Belongs to the DnaJ family. As to quaternary structure, homodimer. The cofactor is Zn(2+).

It is found in the cytoplasm. Its function is as follows. Participates actively in the response to hyperosmotic and heat shock by preventing the aggregation of stress-denatured proteins and by disaggregating proteins, also in an autonomous, DnaK-independent fashion. Unfolded proteins bind initially to DnaJ; upon interaction with the DnaJ-bound protein, DnaK hydrolyzes its bound ATP, resulting in the formation of a stable complex. GrpE releases ADP from DnaK; ATP binding to DnaK triggers the release of the substrate protein, thus completing the reaction cycle. Several rounds of ATP-dependent interactions between DnaJ, DnaK and GrpE are required for fully efficient folding. Also involved, together with DnaK and GrpE, in the DNA replication of plasmids through activation of initiation proteins. The chain is Chaperone protein DnaJ from Tetragenococcus halophilus (Pediococcus halophilus).